Consider the following 204-residue polypeptide: ATP phosphoribosyltransferase (204 aa).

It belongs to the ATP phosphoribosyltransferase family. Short subfamily. Heteromultimer composed of HisG and HisZ subunits.

The protein localises to the cytoplasm. The enzyme catalyses 1-(5-phospho-beta-D-ribosyl)-ATP + diphosphate = 5-phospho-alpha-D-ribose 1-diphosphate + ATP. Its pathway is amino-acid biosynthesis; L-histidine biosynthesis; L-histidine from 5-phospho-alpha-D-ribose 1-diphosphate: step 1/9. Its function is as follows. Catalyzes the condensation of ATP and 5-phosphoribose 1-diphosphate to form N'-(5'-phosphoribosyl)-ATP (PR-ATP). Has a crucial role in the pathway because the rate of histidine biosynthesis seems to be controlled primarily by regulation of HisG enzymatic activity. The polypeptide is ATP phosphoribosyltransferase (Leptospira biflexa serovar Patoc (strain Patoc 1 / Ames)).